The primary structure comprises 417 residues: Serine--tRNA ligase (417 aa).

L-serine is bound at residue T224–E226. ATP contacts are provided by residues R255–E257 and V271. An L-serine-binding site is contributed by E278. E342–S345 provides a ligand contact to ATP. L-serine is bound at residue T377.

It belongs to the class-II aminoacyl-tRNA synthetase family. Type-1 seryl-tRNA synthetase subfamily. In terms of assembly, homodimer. The tRNA molecule binds across the dimer.

The protein resides in the cytoplasm. The catalysed reaction is tRNA(Ser) + L-serine + ATP = L-seryl-tRNA(Ser) + AMP + diphosphate + H(+). It carries out the reaction tRNA(Sec) + L-serine + ATP = L-seryl-tRNA(Sec) + AMP + diphosphate + H(+). The protein operates within aminoacyl-tRNA biosynthesis; selenocysteinyl-tRNA(Sec) biosynthesis; L-seryl-tRNA(Sec) from L-serine and tRNA(Sec): step 1/1. Functionally, catalyzes the attachment of serine to tRNA(Ser). Is also able to aminoacylate tRNA(Sec) with serine, to form the misacylated tRNA L-seryl-tRNA(Sec), which will be further converted into selenocysteinyl-tRNA(Sec). This Mycobacterium leprae (strain TN) protein is Serine--tRNA ligase.